Here is a 396-residue protein sequence, read N- to C-terminus: DnaJ homolog subfamily A member 1 (396 aa).

The J domain maps to 6–68 (TYYDVLGVKP…KKRELYDKGG (63 aa)). Lys-66 is modified (N6-acetyllysine). Residue Ser-83 is modified to Phosphoserine. The segment at 120–204 (GATRKLALQK…CNGRKIVREK (85 aa)) adopts a CR-type zinc-finger fold. Zn(2+)-binding residues include Cys-133, Cys-136, Cys-149, Cys-152, Cys-176, Cys-179, Cys-192, and Cys-195. CXXCXGXG motif repeat units lie at residues 133–140 (CDKCEGRG), 149–156 (CPNCRGTG), 176–183 (CMECQGHG), and 192–199 (CKSCNGRK). Ser-334 carries the phosphoserine modification. A disordered region spans residues 351-396 (VEETDEMDQVELVDFDPNQERRRHYNGEAYEDDEHHPRGGVQCQTS). Residues 352-364 (EETDEMDQVELVD) are compositionally biased toward acidic residues. Residue Tyr-380 is modified to Phosphotyrosine. The residue at position 393 (Cys-393) is a Cysteine methyl ester. A lipid anchor (S-farnesyl cysteine) is attached at Cys-393. Positions 394 to 396 (QTS) are cleaved as a propeptide — removed in mature form.

As to quaternary structure, identified in a complex with HSPA1B and BAX. Interacts with RNF207.

The protein resides in the membrane. It localises to the cytoplasm. Its subcellular location is the microsome. The protein localises to the mitochondrion. It is found in the nucleus. The protein resides in the perinuclear region. Co-chaperone for HSPA8/Hsc70. Plays a role in protein transport into mitochondria via its role as co-chaperone. Functions as co-chaperone for HSPA1B and negatively regulates the translocation of BAX from the cytosol to mitochondria in response to cellular stress, thereby protecting cells against apoptosis. Stimulates ATP hydrolysis, but not the folding of unfolded proteins mediated by HSPA1A (in vitro). Promotes apoptosis in response to cellular stress mediated by exposure to anisomycin or UV. This is DnaJ homolog subfamily A member 1 (DNAJA1) from Pongo abelii (Sumatran orangutan).